The primary structure comprises 261 residues: Potassium/proton antiporter CemA (261 aa).

The next 3 helical transmembrane spans lie at 138 to 158 (IISHLLANLIGLVLLSVCLIL), 186 to 206 (ILLVTDLCIGFHSPHGWELMI), and 221 to 241 (IISGLVSTFPVILDTIFKYWI).

Belongs to the CemA family.

The protein resides in the plastid. Its subcellular location is the chloroplast inner membrane. The enzyme catalyses K(+)(in) + H(+)(out) = K(+)(out) + H(+)(in). Contributes to K(+)/H(+) antiport activity by supporting proton efflux to control proton extrusion and homeostasis in chloroplasts in a light-dependent manner to modulate photosynthesis. Prevents excessive induction of non-photochemical quenching (NPQ) under continuous-light conditions. Indirectly promotes efficient inorganic carbon uptake into chloroplasts. This is Potassium/proton antiporter CemA from Cryptomeria japonica (Japanese cedar).